A 343-amino-acid polypeptide reads, in one-letter code: tRNA N6-adenosine threonylcarbamoyltransferase (343 aa).

Fe cation-binding residues include histidine 112 and histidine 116. Residues 135–139 (LVSGG), aspartate 168, glycine 181, and asparagine 273 contribute to the substrate site. Residue aspartate 301 coordinates Fe cation.

Belongs to the KAE1 / TsaD family. Requires Fe(2+) as cofactor.

The protein localises to the cytoplasm. It catalyses the reaction L-threonylcarbamoyladenylate + adenosine(37) in tRNA = N(6)-L-threonylcarbamoyladenosine(37) in tRNA + AMP + H(+). Functionally, required for the formation of a threonylcarbamoyl group on adenosine at position 37 (t(6)A37) in tRNAs that read codons beginning with adenine. Is involved in the transfer of the threonylcarbamoyl moiety of threonylcarbamoyl-AMP (TC-AMP) to the N6 group of A37, together with TsaE and TsaB. TsaD likely plays a direct catalytic role in this reaction. The sequence is that of tRNA N6-adenosine threonylcarbamoyltransferase from Azoarcus sp. (strain BH72).